The following is a 156-amino-acid chain: MPRETGRKVIASNRKARHDYFIDDVYEAGVSLMGTEVKALRMGRASLVDGFAHIDRGEMWLEGVHIPEYVQGTWTNHTPRRKRKLLLHREEIDRWAGKVRESGLTIVPLALYFLDGRVKVEIGLARGKKNYDKRHALRERQDRREADRAMSERKDR.

Residues 135-156 (HALRERQDRREADRAMSERKDR) form a disordered region.

Belongs to the SmpB family.

Its subcellular location is the cytoplasm. Required for rescue of stalled ribosomes mediated by trans-translation. Binds to transfer-messenger RNA (tmRNA), required for stable association of tmRNA with ribosomes. tmRNA and SmpB together mimic tRNA shape, replacing the anticodon stem-loop with SmpB. tmRNA is encoded by the ssrA gene; the 2 termini fold to resemble tRNA(Ala) and it encodes a 'tag peptide', a short internal open reading frame. During trans-translation Ala-aminoacylated tmRNA acts like a tRNA, entering the A-site of stalled ribosomes, displacing the stalled mRNA. The ribosome then switches to translate the ORF on the tmRNA; the nascent peptide is terminated with the 'tag peptide' encoded by the tmRNA and targeted for degradation. The ribosome is freed to recommence translation, which seems to be the essential function of trans-translation. This chain is SsrA-binding protein, found in Kineococcus radiotolerans (strain ATCC BAA-149 / DSM 14245 / SRS30216).